The primary structure comprises 485 residues: Cysteine protease atg4da (485 aa).

The tract at residues Ala22–Pro46 is disordered. Cys131 serves as the catalytic Nucleophile. Residues Asp368 and His370 contribute to the active site.

This sequence belongs to the peptidase C54 family.

It is found in the cytoplasm. The enzyme catalyses [protein]-C-terminal L-amino acid-glycyl-phosphatidylethanolamide + H2O = [protein]-C-terminal L-amino acid-glycine + a 1,2-diacyl-sn-glycero-3-phosphoethanolamine. It carries out the reaction [protein]-C-terminal L-amino acid-glycyl-phosphatidylserine + H2O = [protein]-C-terminal L-amino acid-glycine + a 1,2-diacyl-sn-glycero-3-phospho-L-serine. In terms of biological role, cysteine protease that plays a key role in autophagy by mediating both proteolytic activation and delipidation of ATG8 family proteins. The protease activity is required for proteolytic activation of ATG8 family proteins to reveal a C-terminal glycine. Exposure of the glycine at the C-terminus is essential for ATG8 proteins conjugation to phosphatidylethanolamine (PE) and insertion to membranes, which is necessary for autophagy. In addition to the protease activity, also mediates delipidation of ATG8 family proteins. Catalyzes delipidation of PE-conjugated forms of ATG8 proteins during macroautophagy. Also involved in non-canonical autophagy, a parallel pathway involving conjugation of ATG8 proteins to single membranes at endolysosomal compartments, by catalyzing delipidation of ATG8 proteins conjugated to phosphatidylserine (PS). ATG4D plays a role in the autophagy-mediated neuronal homeostasis in the central nervous system. The chain is Cysteine protease atg4da from Danio rerio (Zebrafish).